Consider the following 467-residue polypeptide: Argininosuccinate lyase (467 aa).

It belongs to the lyase 1 family. Argininosuccinate lyase subfamily.

Its subcellular location is the cytoplasm. It catalyses the reaction 2-(N(omega)-L-arginino)succinate = fumarate + L-arginine. It participates in amino-acid biosynthesis; L-arginine biosynthesis; L-arginine from L-ornithine and carbamoyl phosphate: step 3/3. In Rhizobium johnstonii (strain DSM 114642 / LMG 32736 / 3841) (Rhizobium leguminosarum bv. viciae), this protein is Argininosuccinate lyase.